The sequence spans 379 residues: Beta sliding clamp (379 aa).

Belongs to the beta sliding clamp family. As to quaternary structure, forms a ring-shaped head-to-tail homodimer around DNA which binds and tethers DNA polymerases and other proteins to the DNA. The DNA replisome complex has a single clamp-loading complex (3 tau and 1 each of delta, delta', psi and chi subunits) which binds 3 Pol III cores (1 core on the leading strand and 2 on the lagging strand) each with a beta sliding clamp dimer. Additional proteins in the replisome are other copies of gamma, psi and chi, Ssb, DNA helicase and RNA primase.

It localises to the cytoplasm. In terms of biological role, confers DNA tethering and processivity to DNA polymerases and other proteins. Acts as a clamp, forming a ring around DNA (a reaction catalyzed by the clamp-loading complex) which diffuses in an ATP-independent manner freely and bidirectionally along dsDNA. Initially characterized for its ability to contact the catalytic subunit of DNA polymerase III (Pol III), a complex, multichain enzyme responsible for most of the replicative synthesis in bacteria; Pol III exhibits 3'-5' exonuclease proofreading activity. The beta chain is required for initiation of replication as well as for processivity of DNA replication. The polypeptide is Beta sliding clamp (dnaN) (Rickettsia felis (strain ATCC VR-1525 / URRWXCal2) (Rickettsia azadi)).